The chain runs to 520 residues: NADH-quinone oxidoreductase subunit N (520 aa).

The next 14 membrane-spanning stretches (helical) occupy residues 13–33 (ALLPEMLLSGGAMLLLLASVW), 55–75 (FGVILCLVVGLAVVIAWGDGA), 87–107 (GFRWAVDLVILLGTALALMLL), 115–135 (AAFGPEVPSLMLLASTGMMVL), 141–161 (LMFVFLGVELMSLAVYVLAGV), 176–196 (FLLGAISSGFLLYGMALLFGA), 219–239 (FMSGVALLLVGLAFKVAAAPF), 250–270 (APLPVTAFMSATVKTAAFAVF), 285–305 (WHMGLWWLAAVTMVVGNVFAL), 313–333 (MLAYSSIAHAGYLLVSIIVGD), 339–359 (ALIFYVVSYTLATMGAFGVLI), 383–403 (WLAIAMTVFLLAFMGMPVLGG), 425–445 (ILAVVLVIASAVSAAYYLAVV), and 468–488 (SLIATAAVALLVFGLYPTPIM). Low complexity predominate over residues 494–508 (ATTTTSPTSNPAAPR). The interval 494–520 (ATTTTSPTSNPAAPRGEVRLQTASVPR) is disordered.

Belongs to the complex I subunit 2 family. NDH-1 is composed of 14 different subunits. Subunits NuoA, H, J, K, L, M, N constitute the membrane sector of the complex.

It localises to the cell inner membrane. The enzyme catalyses a quinone + NADH + 5 H(+)(in) = a quinol + NAD(+) + 4 H(+)(out). Functionally, NDH-1 shuttles electrons from NADH, via FMN and iron-sulfur (Fe-S) centers, to quinones in the respiratory chain. The immediate electron acceptor for the enzyme in this species is believed to be ubiquinone. Couples the redox reaction to proton translocation (for every two electrons transferred, four hydrogen ions are translocated across the cytoplasmic membrane), and thus conserves the redox energy in a proton gradient. This is NADH-quinone oxidoreductase subunit N from Gemmatimonas aurantiaca (strain DSM 14586 / JCM 11422 / NBRC 100505 / T-27).